The sequence spans 322 residues: Homoserine kinase (322 aa).

Position 107-117 (107-117 (PLSSGMGGSAA)) interacts with ATP.

It belongs to the GHMP kinase family. Homoserine kinase subfamily.

Its subcellular location is the cytoplasm. It catalyses the reaction L-homoserine + ATP = O-phospho-L-homoserine + ADP + H(+). The protein operates within amino-acid biosynthesis; L-threonine biosynthesis; L-threonine from L-aspartate: step 4/5. In terms of biological role, catalyzes the ATP-dependent phosphorylation of L-homoserine to L-homoserine phosphate. In Xylella fastidiosa (strain M23), this protein is Homoserine kinase.